Reading from the N-terminus, the 314-residue chain is Ribosomal protein L11 methyltransferase (314 aa).

T161, G182, D204, and N248 together coordinate S-adenosyl-L-methionine.

This sequence belongs to the methyltransferase superfamily. PrmA family.

It localises to the cytoplasm. It catalyses the reaction L-lysyl-[protein] + 3 S-adenosyl-L-methionine = N(6),N(6),N(6)-trimethyl-L-lysyl-[protein] + 3 S-adenosyl-L-homocysteine + 3 H(+). Methylates ribosomal protein L11. The sequence is that of Ribosomal protein L11 methyltransferase from Listeria monocytogenes serotype 4a (strain HCC23).